Consider the following 373-residue polypeptide: Filamin-binding LIM protein 1 (373 aa).

Residues 1–70 form a filamin-binding region; sequence MASKPEKRVA…SPWTTPGRAA (70 aa). Disordered stretches follow at residues 41–119 and 135–176; these read RPWE…PSEE and QLHL…PVEK. The span at 104–114 shows a compositional bias: pro residues; sequence LPPPPPPPPVL. LIM zinc-binding domains lie at 181–242, 243–300, and 301–370; these read DICA…TLER, CGKC…RKFA, and PVCS…RSAA. The interval 276–373 is FERMT2-binding; that stretch reads IGDESFALGS…HVKRSAAGCC (98 aa).

In terms of assembly, interacts with NKX2-5. Isoform 1 and isoform 3 interact with FERMT2, FLNA, FLNB and FLNC. Isoform 2 interacts with FLNB. As to expression, isoform 1 and isoform 3 are expressed in heart, kidney, lung, pancreas, placenta and platelets. Isoform 2 is expressed in brain, heart, kidney, lung, pancreas, placenta, skeletal muscle and platelets.

Its subcellular location is the cell junction. The protein localises to the focal adhesion. It localises to the cytoplasm. The protein resides in the cytoskeleton. It is found in the stress fiber. Its function is as follows. Serves as an anchoring site for cell-ECM adhesion proteins and filamin-containing actin filaments. Is implicated in cell shape modulation (spreading) and motility. May participate in the regulation of filamin-mediated cross-linking and stabilization of actin filaments. May also regulate the assembly of filamin-containing signaling complexes that control actin assembly. Promotes dissociation of FLNA from ITGB3 and ITGB7. Promotes activation of integrins and regulates integrin-mediated cell-cell adhesion. The protein is Filamin-binding LIM protein 1 (FBLIM1) of Homo sapiens (Human).